A 161-amino-acid polypeptide reads, in one-letter code: Putative 2'-deoxynucleoside 5'-phosphate N-hydrolase 1 (161 aa).

Substrate-binding positions include 27-33, tyrosine 42, histidine 60, glutamate 106, and 128-130; these read FLSGSIR and SSM.

It belongs to the 2'-deoxynucleoside 5'-phosphate N-hydrolase 1 family. Monomer and homodimer.

The catalysed reaction is a pyrimidine 2'-deoxyribonucleoside 5'-phosphate + H2O = a pyrimidine nucleobase + 2-deoxy-D-ribose 5-phosphate. It carries out the reaction a purine 2'-deoxyribonucleoside 5'-phosphate + H2O = a purine nucleobase + 2-deoxy-D-ribose 5-phosphate. Functionally, catalyzes the cleavage of the N-glycosidic bond of deoxyribonucleoside 5'-monophosphates to yield deoxyribose 5-phosphate and a purine or pyrimidine base. This is Putative 2'-deoxynucleoside 5'-phosphate N-hydrolase 1 from Methanosarcina mazei (strain ATCC BAA-159 / DSM 3647 / Goe1 / Go1 / JCM 11833 / OCM 88) (Methanosarcina frisia).